The following is a 179-amino-acid chain: Large ribosomal subunit protein bL25 (179 aa).

The protein belongs to the bacterial ribosomal protein bL25 family. CTC subfamily. As to quaternary structure, part of the 50S ribosomal subunit; part of the 5S rRNA/L5/L18/L25 subcomplex. Contacts the 5S rRNA. Binds to the 5S rRNA independently of L5 and L18.

Its function is as follows. This is one of the proteins that binds to the 5S RNA in the ribosome where it forms part of the central protuberance. The chain is Large ribosomal subunit protein bL25 from Desulfitobacterium hafniense (strain DSM 10664 / DCB-2).